A 515-amino-acid polypeptide reads, in one-letter code: Bifunctional purine biosynthesis protein PurH (515 aa).

The MGS-like domain maps to 1-145 (MTKRALISVS…KNHASVTVVV (145 aa)).

Belongs to the PurH family.

The catalysed reaction is (6R)-10-formyltetrahydrofolate + 5-amino-1-(5-phospho-beta-D-ribosyl)imidazole-4-carboxamide = 5-formamido-1-(5-phospho-D-ribosyl)imidazole-4-carboxamide + (6S)-5,6,7,8-tetrahydrofolate. The enzyme catalyses IMP + H2O = 5-formamido-1-(5-phospho-D-ribosyl)imidazole-4-carboxamide. It functions in the pathway purine metabolism; IMP biosynthesis via de novo pathway; 5-formamido-1-(5-phospho-D-ribosyl)imidazole-4-carboxamide from 5-amino-1-(5-phospho-D-ribosyl)imidazole-4-carboxamide (10-formyl THF route): step 1/1. Its pathway is purine metabolism; IMP biosynthesis via de novo pathway; IMP from 5-formamido-1-(5-phospho-D-ribosyl)imidazole-4-carboxamide: step 1/1. This chain is Bifunctional purine biosynthesis protein PurH, found in Streptococcus thermophilus (strain ATCC BAA-491 / LMD-9).